We begin with the raw amino-acid sequence, 124 residues long: Fluoride-specific ion channel FluC (124 aa).

4 consecutive transmembrane segments (helical) span residues 4 to 24 (VLLV…ISIF), 35 to 55 (FGTL…YALG), 60 to 80 (ISPE…TTFS), and 95 to 115 (WLKA…MVYL). Residues G74 and T77 each contribute to the Na(+) site.

This sequence belongs to the fluoride channel Fluc/FEX (TC 1.A.43) family.

The protein resides in the cell inner membrane. It catalyses the reaction fluoride(in) = fluoride(out). Na(+) is not transported, but it plays an essential structural role and its presence is essential for fluoride channel function. Its function is as follows. Fluoride-specific ion channel. Important for reducing fluoride concentration in the cell, thus reducing its toxicity. This is Fluoride-specific ion channel FluC from Shewanella putrefaciens (strain CN-32 / ATCC BAA-453).